The following is a 208-amino-acid chain: Glutathione S-transferase F6 (208 aa).

Residues 2-83 form the GST N-terminal domain; it reads AGIKVFGHPA…YIAHEFSDKG (82 aa). Glutathione contacts are provided by residues 12-13, 41-42, 54-55, and 67-68; these read ST, HK, KV, and ES. One can recognise a GST C-terminal domain in the interval 89-208; the sequence is TGKDMAIIAM…TSRPSAQKVL (120 aa).

The protein belongs to the GST superfamily. Phi family.

It localises to the cytoplasm. The protein localises to the cytosol. It catalyses the reaction RX + glutathione = an S-substituted glutathione + a halide anion + H(+). Functionally, involved in camalexin biosynthesis by probably catalyzing the conjugation of GSH with indole-3-acetonitrile (IAN). May be involved in the conjugation of reduced glutathione to a wide number of exogenous and endogenous hydrophobic electrophiles and have a detoxification role against certain herbicides. This Arabidopsis thaliana (Mouse-ear cress) protein is Glutathione S-transferase F6 (GSTF6).